Reading from the N-terminus, the 709-residue chain is Polyribonucleotide nucleotidyltransferase (709 aa).

Mg(2+) is bound by residues Asp-487 and Asp-493. The 60-residue stretch at 554–613 (PRIHTMKISVEKIKDVIGKGGAVIRQLTEETGTTIEIEDDGTIKIAATDGDQAKEAIRRI) folds into the KH domain. One can recognise an S1 motif domain in the interval 623 to 691 (GVIYTGKVAR…RQGRVRLSMK (69 aa)).

Belongs to the polyribonucleotide nucleotidyltransferase family. Component of the RNA degradosome, which is a multiprotein complex involved in RNA processing and mRNA degradation. Mg(2+) serves as cofactor.

Its subcellular location is the cytoplasm. It catalyses the reaction RNA(n+1) + phosphate = RNA(n) + a ribonucleoside 5'-diphosphate. Involved in mRNA degradation. Catalyzes the phosphorolysis of single-stranded polyribonucleotides processively in the 3'- to 5'-direction. In Vibrio cholerae serotype O1 (strain ATCC 39315 / El Tor Inaba N16961), this protein is Polyribonucleotide nucleotidyltransferase.